A 423-amino-acid chain; its full sequence is Myb-like protein G (423 aa).

Positions 36–90 constitute an HTH myb-type domain; that stretch reads TISKQRENWTDEEHQKFLEALTLFDRDWKKIESFVGSKTVIQIRSHAQKYFIKVQ. The segment at residues 63–86 is a DNA-binding region (H-T-H motif); the sequence is WKKIESFVGSKTVIQIRSHAQKYF. Disordered stretches follow at residues 93-116, 177-205, and 284-372; these read NTGERIPPPRPKRKSIQPYPQKQK, QQAVTTAQSSQRNGGLPPNPSSNNGGTTL, and ISPR…LGNY. Residues 177–202 are compositionally biased toward low complexity; it reads QQAVTTAQSSQRNGGLPPNPSSNNGG. Over residues 286–295 the composition is skewed to polar residues; sequence PRNSTGNINV. A compositionally biased stretch (low complexity) spans 302-354; it reads NNSNNNNNNNNNNNNNNNNNNNNNNNNNNNNNNNNNNNNNNNNNNNNNNNNNN. The segment covering 361 to 372 has biased composition (polar residues); that stretch reads QNHSNMVNLGNY.

Its subcellular location is the nucleus. This is Myb-like protein G (mybG) from Dictyostelium discoideum (Social amoeba).